The following is a 76-amino-acid chain: Omega/Kappa-hexatoxin-Hv1h (76 aa).

The signal sequence occupies residues 1–22 (MNTATGFIVLLVLATILGGIEA). A propeptide spanning residues 23–35 (GESHMRKDAMGRV) is cleaved from the precursor. 3 cysteine pairs are disulfide-bonded: C40–C55, C47–C60, and C54–C74.

Belongs to the neurotoxin 08 (Shiva) family. 02 (omega/kappa toxin) subfamily. In terms of tissue distribution, expressed by the venom gland.

The protein resides in the secreted. Functionally, toxin that may inhibit ion channels. The chain is Omega/Kappa-hexatoxin-Hv1h from Hadronyche versuta (Blue mountains funnel-web spider).